Reading from the N-terminus, the 318-residue chain is Galactose-1-phosphate uridylyltransferase (318 aa).

Zn(2+)-binding residues include Cys-32, Cys-35, and His-90. Asn-130 serves as a coordination point for UDP-alpha-D-glucose. His-141 is a binding site for Zn(2+). The active-site Tele-UMP-histidine intermediate is His-143. Residue Gln-145 participates in UDP-alpha-D-glucose binding.

The protein belongs to the galactose-1-phosphate uridylyltransferase type 1 family. The cofactor is Zn(2+).

The enzyme catalyses alpha-D-galactose 1-phosphate + UDP-alpha-D-glucose = alpha-D-glucose 1-phosphate + UDP-alpha-D-galactose. Its pathway is carbohydrate metabolism; galactose metabolism. This is Galactose-1-phosphate uridylyltransferase (galT) from Thermotoga maritima (strain ATCC 43589 / DSM 3109 / JCM 10099 / NBRC 100826 / MSB8).